A 328-amino-acid chain; its full sequence is Neuropeptides B/W receptor type 1 (328 aa).

Residues 1 to 37 lie on the Extracellular side of the membrane; sequence MDNASFSEPWPANASGPDPALSCSNASTLAPLPAPLA. N-linked (GlcNAc...) asparagine glycans are attached at residues Asn3, Asn13, and Asn25. A helical transmembrane segment spans residues 38 to 61; the sequence is VAVPVVYAVICAVGLAGNSAVLYV. Residues 62-72 lie on the Cytoplasmic side of the membrane; it reads LLRAPRMKTVT. The chain crosses the membrane as a helical span at residues 73–97; it reads NLFILNLAIADELFTLVLPINIADF. At 98–112 the chain is on the extracellular side; the sequence is LLRQWPFGELMCKLI. An intrachain disulfide couples Cys109 to Cys188. The chain crosses the membrane as a helical span at residues 113–132; sequence VAIDQYNTFSSLYFLTVMSA. Over 133–157 the chain is Cytoplasmic; the sequence is DRYLVVLATAESRRVAGRTYSAARA. The helical transmembrane segment at 158 to 177 threads the bilayer; sequence VSLAVWGIVTLVVLPFAVFA. Residues 178–202 lie on the Extracellular side of the membrane; that stretch reads RLDDEQGRRQCVLVFPQPEAFWWRA. Residues 203–224 form a helical membrane-spanning segment; sequence SRLYTLVLGFAIPVSTICVLYT. At 225–248 the chain is on the cytoplasmic side; it reads TLLCRLHAMRLDSHAKALERAKKR. The helical transmembrane segment at 249–273 threads the bilayer; sequence VTFLVVAILAVCLLCWTPYHLSTVV. Topologically, residues 274–283 are extracellular; that stretch reads ALTTDLPQTP. A helical membrane pass occupies residues 284–298; it reads LVIAISYFITSLSYA. The Cytoplasmic portion of the chain corresponds to 299–328; it reads NSCLNPFLYAFLDASFRRNLRQLITCRAAA.

The protein belongs to the G-protein coupled receptor 1 family. In terms of tissue distribution, found in cerebellum and frontal cortex. Detected at high levels in hippocampus, amygdala and trachea; at moderate levels in fetal brain, pituitary gland and prostate. Not in caudate, accumbens, kidney or liver. Also detected at high levels in lung carcinoma.

The protein resides in the cell membrane. Its function is as follows. Interacts specifically with a number of opioid ligands. Receptor for neuropeptides B and W, which may be involved in neuroendocrine system regulation, food intake and the organization of other signals. Has a higher affinity for neuropeptide B. The chain is Neuropeptides B/W receptor type 1 (NPBWR1) from Homo sapiens (Human).